The following is a 222-amino-acid chain: UPF0758 protein Cag_1513 (222 aa).

The MPN domain occupies 100-222 (KIMAAGDVFE…WYSFRERGLL (123 aa)). Residues histidine 171, histidine 173, and aspartate 184 each contribute to the Zn(2+) site. The short motif at 171–184 (HNHPSGDVNPSNAD) is the JAMM motif element.

It belongs to the UPF0758 family.

The polypeptide is UPF0758 protein Cag_1513 (Chlorobium chlorochromatii (strain CaD3)).